Reading from the N-terminus, the 444-residue chain is Tubulin beta chain (444 aa).

The GTP site is built by Gln11, Glu69, Ser138, Gly142, Thr143, Gly144, Asn204, and Asn226. Residue Glu69 coordinates Mg(2+).

This sequence belongs to the tubulin family. Dimer of alpha and beta chains. A typical microtubule is a hollow water-filled tube with an outer diameter of 25 nm and an inner diameter of 15 nM. Alpha-beta heterodimers associate head-to-tail to form protofilaments running lengthwise along the microtubule wall with the beta-tubulin subunit facing the microtubule plus end conferring a structural polarity. Microtubules usually have 13 protofilaments but different protofilament numbers can be found in some organisms and specialized cells. Mg(2+) serves as cofactor.

The protein localises to the cytoplasm. The protein resides in the cytoskeleton. Tubulin is the major constituent of microtubules, a cylinder consisting of laterally associated linear protofilaments composed of alpha- and beta-tubulin heterodimers. Microtubules grow by the addition of GTP-tubulin dimers to the microtubule end, where a stabilizing cap forms. Below the cap, tubulin dimers are in GDP-bound state, owing to GTPase activity of alpha-tubulin. This chain is Tubulin beta chain, found in Euplotoides octocarinatus (Freshwater ciliate).